The primary structure comprises 263 residues: uncharacterized protein (263 aa).

Belongs to the flavoredoxin family. The cofactor is FMN.

This is an uncharacterized protein from Aeropyrum pernix (strain ATCC 700893 / DSM 11879 / JCM 9820 / NBRC 100138 / K1).